The chain runs to 332 residues: Galactosylgalactosylxylosylprotein 3-beta-glucuronosyltransferase 1 (332 aa).

Residues 1-6 lie on the Cytoplasmic side of the membrane; sequence MPKRRD. An essential for transport from endoplasmic reticulum to Golgi apparatus and interaction with SAR1A region spans residues 3 to 5; sequence KRR. The chain crosses the membrane as a helical; Signal-anchor for type II membrane protein span at residues 7 to 27; the sequence is ILAIVLIVLPWTLLITVWHQS. Topologically, residues 28 to 332 are lumenal; sequence TLAPLLAVHK…KGFTDPSVEI (305 aa). 91 to 93 is a binding site for UDP-alpha-D-glucuronate; it reads PTY. A phosphothreonine mark is found at threonine 103 and threonine 108. Aspartate 122 lines the UDP-alpha-D-glucuronate pocket. N-linked (GlcNAc...) asparagine glycosylation occurs at asparagine 140. UDP-alpha-D-glucuronate is bound by residues arginine 165 and arginine 170. Asparagine 184 carries N-linked (GlcNAc...) asparagine glycosylation. Residue 195–197 coordinates UDP-alpha-D-glucuronate; that stretch reads DDD. Residue aspartate 197 participates in Mn(2+) binding. The interaction with galactose moiety of substrate glycoprotein stretch occupies residues 243 to 252; it reads FDPHRPFAID. The active-site Proton donor/acceptor is glutamate 282. An N-linked (GlcNAc...) asparagine glycan is attached at asparagine 301. A UDP-alpha-D-glucuronate-binding site is contributed by 309–311; that stretch reads HTR.

This sequence belongs to the glycosyltransferase 43 family. Homodimer. Interacts with SAR1A. Mn(2+) is required as a cofactor. Post-translationally, the soluble form derives from the membrane form by proteolytic processing.

The protein resides in the golgi apparatus membrane. Its subcellular location is the secreted. The catalysed reaction is 3-O-(beta-D-galactosyl-(1-&gt;3)-beta-D-galactosyl-(1-&gt;4)-beta-D-xylosyl)-L-seryl-[protein] + UDP-alpha-D-glucuronate = 3-O-(beta-D-GlcA-(1-&gt;3)-beta-D-Gal-(1-&gt;3)-beta-D-Gal-(1-&gt;4)-beta-D-Xyl)-L-seryl-[protein] + UDP + H(+). It participates in protein modification; protein glycosylation. In terms of biological role, involved in the biosynthesis of L2/HNK-1 carbohydrate epitope on glycoproteins. Can also play a role in glycosaminoglycan biosynthesis. Substrates include asialo-orosomucoid (ASOR), asialo-fetuin, and asialo-neural cell adhesion molecule. Requires sphingomyelin for activity: stearoyl-sphingomyelin was the most effective, followed by palmitoyl-sphingomyelin and lignoceroyl-sphingomyelin. Activity was demonstrated only for sphingomyelin with a saturated fatty acid and not for that with an unsaturated fatty acid, regardless of the length of the acyl group. The sequence is that of Galactosylgalactosylxylosylprotein 3-beta-glucuronosyltransferase 1 from Pan troglodytes (Chimpanzee).